Here is a 177-residue protein sequence, read N- to C-terminus: Ribulose bisphosphate carboxylase small subunit, chloroplastic 2 (177 aa).

A chloroplast-targeting transit peptide spans 1–56; sequence MASSMMASTAAVARAGPAQSNMVAPFNGLRSSVAFPATRKANKNLSTLPSNGGKVS.

Belongs to the RuBisCO small chain family. Heterohexadecamer of 8 large and 8 small subunits.

The protein localises to the plastid. It localises to the chloroplast. In terms of biological role, ruBisCO catalyzes two reactions: the carboxylation of D-ribulose 1,5-bisphosphate, the primary event in carbon dioxide fixation, as well as the oxidative fragmentation of the pentose substrate. Both reactions occur simultaneously and in competition at the same active site. Although the small subunit is not catalytic it is essential for maximal activity. The chain is Ribulose bisphosphate carboxylase small subunit, chloroplastic 2 from Lemna gibba (Swollen duckweed).